The following is a 711-amino-acid chain: Ribosomal RNA large subunit methyltransferase K/L (711 aa).

The THUMP domain occupies 42 to 153 (DAQRAVLWSR…KGRATISVDL (112 aa)).

Belongs to the methyltransferase superfamily. RlmKL family.

The protein localises to the cytoplasm. The catalysed reaction is guanosine(2445) in 23S rRNA + S-adenosyl-L-methionine = N(2)-methylguanosine(2445) in 23S rRNA + S-adenosyl-L-homocysteine + H(+). It carries out the reaction guanosine(2069) in 23S rRNA + S-adenosyl-L-methionine = N(2)-methylguanosine(2069) in 23S rRNA + S-adenosyl-L-homocysteine + H(+). Specifically methylates the guanine in position 2445 (m2G2445) and the guanine in position 2069 (m7G2069) of 23S rRNA. The polypeptide is Ribosomal RNA large subunit methyltransferase K/L (Xanthomonas oryzae pv. oryzae (strain MAFF 311018)).